A 119-amino-acid polypeptide reads, in one-letter code: MAARIAGVNIPVQKHARIALQAIYGIGNSRALEICKEAKIDPATKVKDLSEAELDALRTEVGKFSVEGDLRRERSMDIKRKMDLGAYEGIRHRRGLPLRGQRTRSNARTRKGKRKPIRS.

The tract at residues 93–119 (RRGLPLRGQRTRSNARTRKGKRKPIRS) is disordered.

Belongs to the universal ribosomal protein uS13 family. Part of the 30S ribosomal subunit. Forms a loose heterodimer with protein S19. Forms two bridges to the 50S subunit in the 70S ribosome.

Located at the top of the head of the 30S subunit, it contacts several helices of the 16S rRNA. In the 70S ribosome it contacts the 23S rRNA (bridge B1a) and protein L5 of the 50S subunit (bridge B1b), connecting the 2 subunits; these bridges are implicated in subunit movement. Contacts the tRNAs in the A and P-sites. The chain is Small ribosomal subunit protein uS13 from Coxiella burnetii (strain RSA 493 / Nine Mile phase I).